The chain runs to 362 residues: Chalcone synthase A (362 aa).

Residue Cys168 is part of the active site.

Belongs to the thiolase-like superfamily. Chalcone/stilbene synthases family.

The catalysed reaction is (E)-4-coumaroyl-CoA + 3 malonyl-CoA + 3 H(+) = 2',4,4',6'-tetrahydroxychalcone + 3 CO2 + 4 CoA. The protein operates within secondary metabolite biosynthesis; flavonoid biosynthesis. In terms of biological role, the primary product of this enzyme is 4,2',4',6'-tetrahydroxychalcone (also termed naringenin-chalcone or chalcone) which can under specific conditions spontaneously isomerize into naringenin. This chain is Chalcone synthase A (CHSA), found in Ipomoea trifida (Morning glory).